A 635-amino-acid chain; its full sequence is Threonine--tRNA ligase (635 aa).

One can recognise a TGS domain in the interval 1 to 61 (MIKITLKDGK…HKDSSLEILT (61 aa)). The tract at residues 242–532 (DHRKLGKELD…LIEQYAGAFP (291 aa)) is catalytic. Residues C333, H384, and H509 each coordinate Zn(2+).

This sequence belongs to the class-II aminoacyl-tRNA synthetase family. Homodimer. Zn(2+) serves as cofactor.

It is found in the cytoplasm. The enzyme catalyses tRNA(Thr) + L-threonine + ATP = L-threonyl-tRNA(Thr) + AMP + diphosphate + H(+). Catalyzes the attachment of threonine to tRNA(Thr) in a two-step reaction: L-threonine is first activated by ATP to form Thr-AMP and then transferred to the acceptor end of tRNA(Thr). Also edits incorrectly charged L-seryl-tRNA(Thr). The polypeptide is Threonine--tRNA ligase (Clostridium botulinum (strain Langeland / NCTC 10281 / Type F)).